The following is a 713-amino-acid chain: Probable glutamate carboxypeptidase VP8 (713 aa).

Topologically, residues 1-10 (MPHSVLARLP) are cytoplasmic. The helical; Signal-anchor for type II membrane protein transmembrane segment at 11–31 (PGSVRLVAAFGLLLLVSLLVL) threads the bilayer. At 32–713 (HRRPGRPHVA…PTNFSSLVTP (682 aa)) the chain is on the extracellular side. N66 and N311 each carry an N-linked (GlcNAc...) asparagine glycan. The interval 245–539 (ATSGAERLKF…EIWGLLALRL (295 aa)) is catalytic. Zn(2+) contacts are provided by H345 and D355. Catalysis depends on E392, which acts as the Nucleophile. The Zn(2+) site is built by E393, D421, and H505. Residues N667 and N706 are each glycosylated (N-linked (GlcNAc...) asparagine).

Belongs to the peptidase M28 family. M28B subfamily. Zn(2+) serves as cofactor.

It localises to the cell membrane. It carries out the reaction Release of an unsubstituted, C-terminal glutamyl residue, typically from Ac-Asp-Glu or folylpoly-gamma-glutamates.. Functionally, involved in the regulation of meristem development and seed maturation processes. Mediates regulation of embryonic regulatory genes and genes controlling abscisic acid (ABA) biosynthesis and turnover in developing seeds. May be required for the synthesis of small signaling molecules that integrates meristem and embryo formation in seeds. This is Probable glutamate carboxypeptidase VP8 from Zea mays (Maize).